Reading from the N-terminus, the 444-residue chain is Multidrug resistance protein MdtA (444 aa).

A signal peptide spans 1-20 (MKSQSKRTSRLFVFVGVVVA). Residues 37 to 52 (NNTSGAQQSARGQDTS) show a composition bias toward polar residues. Disordered regions lie at residues 37–60 (NNTSGAQQSARGQDTSHGGRRNTP) and 399–444 (PRSA…AEKS). Over residues 409 to 419 (ASAEKAAAEAE) the composition is skewed to low complexity. A compositionally biased stretch (polar residues) spans 435–444 (ARSTTAAEKS).

This sequence belongs to the membrane fusion protein (MFP) (TC 8.A.1) family. In terms of assembly, part of a tripartite efflux system composed of MdtA, MdtB and MdtC.

It is found in the cell inner membrane. In Yersinia pseudotuberculosis serotype I (strain IP32953), this protein is Multidrug resistance protein MdtA.